A 346-amino-acid polypeptide reads, in one-letter code: [LysW]-lysine/[LysW]-ornithine hydrolase (346 aa).

Position 68 (histidine 68) interacts with Zn(2+). Residue aspartate 70 is part of the active site. Aspartate 92 contributes to the Zn(2+) binding site. Residue glutamate 122 is the Proton acceptor of the active site. Zn(2+) is bound by residues glutamate 123, glutamate 146, and histidine 317.

The protein belongs to the peptidase M20A family. LysK subfamily. Requires Zn(2+) as cofactor. The cofactor is Co(2+).

It is found in the cytoplasm. It catalyses the reaction [amino-group carrier protein]-C-terminal-gamma-(L-lysyl)-L-glutamate + H2O = [amino-group carrier protein]-C-terminal-L-glutamate + L-lysine. It carries out the reaction [amino-group carrier protein]-C-terminal-gamma-(L-ornithyl)-L-glutamate + H2O = [amino-group carrier protein]-C-terminal-L-glutamate + L-ornithine. It functions in the pathway amino-acid biosynthesis; L-lysine biosynthesis via AAA pathway; L-lysine from L-alpha-aminoadipate (Thermus route): step 5/5. The protein operates within amino-acid biosynthesis; L-arginine biosynthesis. Its function is as follows. Catalyzes the release of L-lysine from [LysW]-gamma-L-lysine and the release of L-ornithine from [LysW]-L-ornithine. This chain is [LysW]-lysine/[LysW]-ornithine hydrolase, found in Saccharolobus islandicus (strain M.16.4 / Kamchatka #3) (Sulfolobus islandicus).